The chain runs to 65 residues: Hirudin-2 (65 aa).

The tract at residues 1–3 (ITY) is interaction with thrombin active site. Cystine bridges form between cysteine 6/cysteine 14, cysteine 16/cysteine 28, and cysteine 22/cysteine 39. The disordered stretch occupies residues 39-65 (CVTGEGTPKPQSHNDGDFEEIPEEYLQ). O-linked (GalNAc...) threonine glycosylation is present at threonine 45. The segment at 55–65 (DFEEIPEEYLQ) is interaction with fibrinogen-binding exosite of thrombin. Residues 55 to 65 (DFEEIPEEYLQ) show a composition bias toward acidic residues. Residue tyrosine 63 is modified to Sulfotyrosine.

It belongs to the protease inhibitor I14 (hirudin) family.

The protein localises to the secreted. Functionally, hirudin is a potent thrombin-specific protease inhibitor. It forms a stable non-covalent complex with alpha-thrombin, thereby abolishing its ability to cleave fibrinogen. This is Hirudin-2 from Hirudo medicinalis (Medicinal leech).